The chain runs to 94 residues: Small ribosomal subunit protein uS17 (94 aa).

It belongs to the universal ribosomal protein uS17 family. As to quaternary structure, part of the 30S ribosomal subunit.

Functionally, one of the primary rRNA binding proteins, it binds specifically to the 5'-end of 16S ribosomal RNA. This Deinococcus geothermalis (strain DSM 11300 / CIP 105573 / AG-3a) protein is Small ribosomal subunit protein uS17.